The following is a 1328-amino-acid chain: MIWYVATLIASVISTRGLVAQGAHGLREEPEFVTARAGEGVVLRCDVIHPVTGQPPPYVVEWFKFGVPIPIFIKFGYYPPHVDPEYAGRASLHDKASLRLEQVRSEDQGWYECKVLMLDQQYDTFHNGSWVHLTINAPPTFTETPPQYIEAKEGGSITMTCTAFGNPKPIVTWLKEGTLLGASAKYQVSDGSLTVTSVSREDRGAYTCRAYSIQGEAVHTTHLLVQGPPFIVSPPENITVNISQDALLTCRAEAYPGNLTYTWYWQDENVYFQNDLKLRVRILIDGTLIIFRVKPEDAGKYTCVPSNSLGRSPSASAYLTVQYPARVLNMPPVIYVPVGIHGYIRCPVDAEPPATVVKWNKDGRPLQVEKNLGWTLMEDGSIRIEEATEEALGTYTCVPYNTLGTMGQSAPARLVLKDPPYFTVLPGWEYRQEAGRELLIPCAAAGDPFPVITWRKVGKPSRSKHNALPSGSLQFRALSKEDHGEWECVATNVVTSITASTHLTVIGTSPHAPGSVRVHVSMTTANVSWEPGYDGGYEQTFSVWMKRAQFGPHDWLSLSVPPGPSWLLVDSLEPETAYQFSVLAQNRLGTSAFSEVVTVNTLAFPVTTPEPLVLVTPPRCLTANRTQQGVLLSWLPPANHSFPIDRYIMEFRVGERWEMLDDAIPGTDGDFFAKDLSQDTWYEFRVLAVMQDLISEPSNIAGVSSTDIFPQPDLTDDGLARPVLAGIVATICFLAAAILFSTLAACFVNKQRKRKLKRKKDPPLSITHCRKSLESPLSSGKVSPESIRTLRAPSESSDDQGQPAAKRMLSPTREKELSLYKKTKRAISSRKYSVAKAEAEAEATTPIELISRGPDGRFVMGPSEMEPSVKGRRIEGFPFAEETDMYPEFRQSDEENEDPLVPTSVAALKPQLTPMSSSQDSYLPPPAYSPRFQPRGLEGPSGLGGRLQATGQARPPAPRPFQHGQYYGYLSSSSPGEVEPPPFYMPEVGSPLSSVMSSPPLHTEGPFGHPTIPEENGENASNSTLPLTQTPTGGRSPEPWGRPEFPFGGLETPAMMFPHQLHPCDVAESLQPKACLPRGLPPAPLQVPAAYPGMLSLEAPKGWVGKSPGRGPIPAPPATKWQERPMQPLVSQGQLRHTSQGMGIPVLPYPEPAEPGGHGGPSTFGLDTRWYEPQPRPRPSPRQARRAEPSLHQVVLQPSRLSPLTQSPLSSRTGSPELAARARPRPGLLQQAEMSEITLQPPAAVSFSRKSTPSSTGSPSQSSRSGSPSYRPTMGFTTLATGYPSPPPGPAPPAPGDTLDVFGQTPSPRRMGEEPLRPEPPTTLPTSG.

Positions 1-17 are cleaved as a signal peptide; it reads MIWYVATLIASVISTRG. Over 18-722 the chain is Extracellular; that stretch reads LVAQGAHGLR…DLTDDGLARP (705 aa). Ig-like domains are found at residues 30 to 115, 139 to 226, 228 to 320, 324 to 415, and 420 to 504; these read PEFV…ECKV, PTFT…LLVQ, PPFI…AYLT, PARV…ARLV, and PYFT…THLT. Cystine bridges form between C45–C113 and C161–C208. N241 and N258 each carry an N-linked (GlcNAc...) asparagine glycan. Disulfide bonds link C250-C303, C346-C397, and C442-C488. 2 Fibronectin type-III domains span residues 512 to 604 and 614 to 708; these read APGS…TLAF and LVTP…STDI. N624 is a glycosylation site (N-linked (GlcNAc...) asparagine). The helical transmembrane segment at 723 to 743 threads the bilayer; the sequence is VLAGIVATICFLAAAILFSTL. The Cytoplasmic portion of the chain corresponds to 744-1328; that stretch reads AACFVNKQRK…EPPTTLPTSG (585 aa). Disordered stretches follow at residues 758–817, 914–1040, and 1106–1328; these read RKKD…EKEL, PMSS…PEPW, and KSPG…PTSG. Phosphoserine occurs at positions 775, 783, and 794. Positions 990–1001 are enriched in low complexity; that stretch reads SPLSSVMSSPPL. Polar residues-rich tracts occupy residues 1018 to 1033, 1129 to 1141, and 1199 to 1214; these read ENAS…TPTG, LVSQ…TSQG, and SRLS…SRTG. An Omega-N-methylarginine modification is found at R1136. Residues S1207 and S1215 each carry the phosphoserine modification. Residues 1246–1273 are compositionally biased toward low complexity; it reads SFSRKSTPSSTGSPSQSSRSGSPSYRPT. Pro residues-rich tracts occupy residues 1284-1295 and 1318-1328; these read PSPPPGPAPPAP and PEPPTTLPTSG.

Belongs to the immunoglobulin superfamily. Turtle family. Found in a complex with MAGI2 and NLGN2, where it interacts with MAGI2 (via PDZ 5 and PDZ 6 domains). In terms of processing, N-glycosylated and sialylated. Not significantly O-glycosylated. Detected in brain.

It localises to the cell membrane. The protein resides in the postsynaptic cell membrane. Its subcellular location is the postsynaptic density. In terms of biological role, transmembrane protein which is abundantly expressed in interneurons, where it may regulate inhibitory synapse development. May mediate homophilic cell adhesion. The polypeptide is Protein turtle homolog B (Mus musculus (Mouse)).